Here is a 262-residue protein sequence, read N- to C-terminus: 3-methyl-2-oxobutanoate hydroxymethyltransferase (262 aa).

Residues Asp-31 and Asp-70 each contribute to the Mg(2+) site. Residues 31–32 (DS), Asp-70, and Lys-99 contribute to the 3-methyl-2-oxobutanoate site. Residue Glu-101 coordinates Mg(2+). Catalysis depends on Glu-168, which acts as the Proton acceptor.

It belongs to the PanB family. As to quaternary structure, homodecamer; pentamer of dimers. The cofactor is Mg(2+).

It localises to the cytoplasm. The catalysed reaction is 3-methyl-2-oxobutanoate + (6R)-5,10-methylene-5,6,7,8-tetrahydrofolate + H2O = 2-dehydropantoate + (6S)-5,6,7,8-tetrahydrofolate. The protein operates within cofactor biosynthesis; coenzyme A biosynthesis. In terms of biological role, catalyzes the reversible reaction in which hydroxymethyl group from 5,10-methylenetetrahydrofolate is transferred onto alpha-ketoisovalerate to form ketopantoate. The polypeptide is 3-methyl-2-oxobutanoate hydroxymethyltransferase (Cenarchaeum symbiosum (strain A)).